The sequence spans 388 residues: MPEFKLADRLATLPPYLFAEIDRLKAEVAAQGVDIISLGIGDPDLPTPDFIIEALHKAAKNPVNHQYPSYVGLLTFRQAVADWYKERFDVELDATKEVVSLIGSKEGIAHFPLAFVNPGDLVLVASPNYPVYPVASGFAGGEVEIVPLLEENDFLPNLDAISDEKWDKCKIFFVNYPNNPTSATATPEFYAELVAKAKKHNVIIAADAAYTEVYYDEDKKPISILETPGAKDVAIEFHSLSKTYNMTGWRCGMAVGNASLVAGLGKIKENVDSGIFQAVQEAGIVALKEGEPYVKEFRKIYKERRDCVIEALEKINISCKVPDASIFVWAKTPEGYTSSEFVSKLLKETGVVVTPGNGFGESGEGYFRISLTVDTDRLKEAVSRISKL.

Substrate is bound by residues Y16 and G41. Pyridoxal 5'-phosphate-binding positions include Y70, 104–105 (SK), Y129, N179, Y210, and 239–241 (SLS). Positions 105, 129, and 179 each coordinate substrate. Position 242 is an N6-(pyridoxal phosphate)lysine (K242). R250 lines the pyridoxal 5'-phosphate pocket. Position 368 (R368) interacts with substrate.

It belongs to the class-I pyridoxal-phosphate-dependent aminotransferase family. LL-diaminopimelate aminotransferase subfamily. In terms of assembly, homodimer. Pyridoxal 5'-phosphate is required as a cofactor.

It catalyses the reaction (2S,6S)-2,6-diaminopimelate + 2-oxoglutarate = (S)-2,3,4,5-tetrahydrodipicolinate + L-glutamate + H2O + H(+). It participates in amino-acid biosynthesis; L-lysine biosynthesis via DAP pathway; LL-2,6-diaminopimelate from (S)-tetrahydrodipicolinate (aminotransferase route): step 1/1. Its function is as follows. Involved in the synthesis of meso-diaminopimelate (m-DAP or DL-DAP), required for both lysine and peptidoglycan biosynthesis. Catalyzes the direct conversion of tetrahydrodipicolinate to LL-diaminopimelate. The sequence is that of LL-diaminopimelate aminotransferase from Maridesulfovibrio salexigens (strain ATCC 14822 / DSM 2638 / NCIMB 8403 / VKM B-1763) (Desulfovibrio salexigens).